The sequence spans 938 residues: MSDYKSTLNLPETGFPMRGDLAKREPGMLARWTDDDLYGIIRAAKKGKKTFILHDGPPYANGSIHIGHSVNKILKDIIVKSKGLSGYDSPYVPGWDCHGLPIELKVEQEYGKPGEKFTAAEFRAKCREYAATQVDGQRKDFIRLGVLGDWSHPYLTMDFKTEANIIRALGKIIGNGHLHKGAKPVHWCVDCRSALAEAEVEYYDKTSPSIDVAFQAVDQDALKAKFAVSNVNGPISLVIWTTTPWTLPANRAISIAPDFDYALVQIDGQAVILAKDLVESVMQRIGVTDYTILGTVKGAELELLRFTHPFMGFDVPAILGDHVTLDAGTGAVHTAPGHGPDDYVIGQKYGLETANPVGPDGTYLPGTYPTLDGVNVFKANDIVVALLQEKGALLHVEKMQHSYPCCWRHKTPIIFRATPQWFVSMDQKGLRAQSLKEIKGVQWIPDWGQARIESMVANRPDWCISRQRTWGVPMSLFVHKDTEELHPRTLELMEEVAKRVEVDGIQAWWDLDAKELLGDEADQYVKVPDTLDVWFDSGSTHSSVVDVRPEFAGHAADMYLEGSDQHRGWFMSSLMISTAMKGKAPYRQVLTHGFTVDGQGRKMSKSIGNTVSPQDVMNKLGADILRLWVASTDYTGEMAVSDEILKRAADSYRRIRNTARFLLANLNGFDPAKDMVKPEEMVVLDRWAVGCAKAAQEDILKAYEAYDFHEVVQRLMRFCSVEMGSFYLDIIKDRQYTAKADSVARRSCQTALYHIAEALVRWMAPILSFTADEVWGYLPGEREKYVFTGEWYEGLFGLADSEAMNDAFWDELLKVRGEVNKVIEQARADKKVGGSLEAAVTLFAEPELAAKLTALGDELRFVLLTSGATVADYNDAPADAQQSEVLKGLKVALSKAEGEKCPRCWHYTQDVGKVAEHAEICGRCVSNVAGDGEKRKFA.

The 'HIGH' region motif lies at 58 to 68 (PYANGSIHIGH). Lys-183 is modified (N6-acetyllysine). L-isoleucyl-5'-AMP is bound at residue Glu-561. The 'KMSKS' region signature appears at 602–606 (KMSKS). Residue Lys-605 participates in ATP binding. Cys-901, Cys-904, Cys-921, and Cys-924 together coordinate Zn(2+).

Belongs to the class-I aminoacyl-tRNA synthetase family. IleS type 1 subfamily. Monomer. The cofactor is Zn(2+).

It is found in the cytoplasm. The enzyme catalyses tRNA(Ile) + L-isoleucine + ATP = L-isoleucyl-tRNA(Ile) + AMP + diphosphate. In terms of biological role, catalyzes the attachment of isoleucine to tRNA(Ile). As IleRS can inadvertently accommodate and process structurally similar amino acids such as valine, to avoid such errors it has two additional distinct tRNA(Ile)-dependent editing activities. One activity is designated as 'pretransfer' editing and involves the hydrolysis of activated Val-AMP. The other activity is designated 'posttransfer' editing and involves deacylation of mischarged Val-tRNA(Ile). The polypeptide is Isoleucine--tRNA ligase (Escherichia coli O17:K52:H18 (strain UMN026 / ExPEC)).